A 708-amino-acid chain; its full sequence is Serine/threonine-protein kinase Nek5 (708 aa).

Residues 4-259 enclose the Protein kinase domain; it reads YDVIKAIGQG…INSILKRPFL (256 aa). Residues 10 to 18 and K33 each bind ATP; that span reads IGQGAFGKA. D128 functions as the Proton acceptor in the catalytic mechanism. Disordered regions lie at residues 376–403 and 423–454; these read SYHP…PSQW and KQLG…FQEL. Over residues 440–454 the composition is skewed to basic and acidic residues; the sequence is QELRSNGEEPRFQEL.

Belongs to the protein kinase superfamily. NEK Ser/Thr protein kinase family. NIMA subfamily. Requires Mg(2+) as cofactor.

It is found in the cell projection. The protein localises to the cilium. The protein resides in the flagellum. It carries out the reaction L-seryl-[protein] + ATP = O-phospho-L-seryl-[protein] + ADP + H(+). It catalyses the reaction L-threonyl-[protein] + ATP = O-phospho-L-threonyl-[protein] + ADP + H(+). The sequence is that of Serine/threonine-protein kinase Nek5 (NEK5) from Homo sapiens (Human).